The following is a 259-amino-acid chain: 7-cyano-7-deazaguanine synthase (259 aa).

Position 32–42 (32–42) interacts with ATP; the sequence is LSGGLDSVTCL. Zn(2+) is bound by residues Cys223, Cys233, Cys236, and Cys239.

Belongs to the QueC family. Zn(2+) serves as cofactor.

The enzyme catalyses 7-carboxy-7-deazaguanine + NH4(+) + ATP = 7-cyano-7-deazaguanine + ADP + phosphate + H2O + H(+). It functions in the pathway purine metabolism; 7-cyano-7-deazaguanine biosynthesis. Its function is as follows. Catalyzes the ATP-dependent conversion of 7-carboxy-7-deazaguanine (CDG) to 7-cyano-7-deazaguanine (preQ(0)). In Psychrobacter cryohalolentis (strain ATCC BAA-1226 / DSM 17306 / VKM B-2378 / K5), this protein is 7-cyano-7-deazaguanine synthase.